A 152-amino-acid chain; its full sequence is Protein eva-1 homolog A (152 aa).

The interval methionine 1–histidine 60 is necessary for the localization and biological activity. The helical transmembrane segment at alanine 35 to isoleucine 55 threads the bilayer. The interval lysine 70–valine 97 is disordered. A compositionally biased stretch (acidic residues) spans serine 82–valine 92. The residue at position 106 (threonine 106) is a Phosphothreonine. Residue serine 114 is modified to Phosphoserine; by FAM20C.

Belongs to the EVA1 family. As to expression, expressed in lung, kidney, liver, pancreas, placenta, but not in heart and skeletal muscle.

It is found in the endoplasmic reticulum membrane. Its subcellular location is the lysosome membrane. In terms of biological role, acts as a regulator of programmed cell death, mediating both autophagy and apoptosis. In Homo sapiens (Human), this protein is Protein eva-1 homolog A (EVA1A).